Here is a 272-residue protein sequence, read N- to C-terminus: Phosphoglycolate phosphatase (272 aa).

The Nucleophile role is filled by Asp19. 3 residues coordinate Mg(2+): Asp19, Asp21, and Asp182.

It belongs to the HAD-like hydrolase superfamily. CbbY/CbbZ/Gph/YieH family. The cofactor is Mg(2+).

The enzyme catalyses 2-phosphoglycolate + H2O = glycolate + phosphate. It participates in organic acid metabolism; glycolate biosynthesis; glycolate from 2-phosphoglycolate: step 1/1. Its function is as follows. Specifically catalyzes the dephosphorylation of 2-phosphoglycolate. Is involved in the dissimilation of the intracellular 2-phosphoglycolate formed during the DNA repair of 3'-phosphoglycolate ends, a major class of DNA lesions induced by oxidative stress. The sequence is that of Phosphoglycolate phosphatase from Pseudomonas savastanoi pv. phaseolicola (strain 1448A / Race 6) (Pseudomonas syringae pv. phaseolicola (strain 1448A / Race 6)).